Here is a 325-residue protein sequence, read N- to C-terminus: MRGDDRHNGGYCAPPARLPVPALTAILELRKVRKQYGDTVVVNDLDLQVHRGQCFGLLGPNGAGKTTTLRLLLGLTTPAGGSLTLCGEPIPERAPQARMRVGVVPQFDNLDPDFSVIENLRIFGRYFGLSSAVIERRVPALLEFARLENRANAQVRDLSGGMRRRLTVARALINDPDLLIMDEPTTGLDPQARHLIWERLKSLMASGKTILLTTHFMEEAERLCNYLCVIDGGRKIAEGKPHDLIDSQIGCDVVEVYGDELDTLRGSLTPLAERTEMSGETLFCYVREPAPLLAALHGQSGVRYLHRPANLEDVFLKLTGREMRD.

The ABC transporter domain occupies 27–257 (LELRKVRKQY…QIGCDVVEVY (231 aa)). ATP is bound at residue 59–66 (GPNGAGKT).

This sequence belongs to the ABC transporter superfamily. Lipooligosaccharide exporter (TC 3.A.1.102) family. In terms of assembly, the complex is composed of two ATP-binding proteins (NodI) and two transmembrane proteins (NodJ).

The protein localises to the cell inner membrane. Functionally, part of the ABC transporter complex NodIJ involved in the export of the nodulation factors (Nod factors), the bacterial signal molecules that induce symbiosis and subsequent nodulation induction. Nod factors are LCO (lipo-chitin oligosaccharide), a modified beta-1,4-linked N-acetylglucosamine oligosaccharide. This subunit is responsible for energy coupling to the transport system. This chain is Nod factor export ATP-binding protein I, found in Cupriavidus pinatubonensis (strain JMP 134 / LMG 1197) (Cupriavidus necator (strain JMP 134)).